Consider the following 208-residue polypeptide: Small ribosomal subunit protein uS4 (208 aa).

One can recognise an S4 RNA-binding domain in the interval 98 to 161 (RRLDNTIYRL…RQSPIILEAQ (64 aa)).

This sequence belongs to the universal ribosomal protein uS4 family. As to quaternary structure, part of the 30S ribosomal subunit. Contacts protein S5. The interaction surface between S4 and S5 is involved in control of translational fidelity.

One of the primary rRNA binding proteins, it binds directly to 16S rRNA where it nucleates assembly of the body of the 30S subunit. Functionally, with S5 and S12 plays an important role in translational accuracy. The protein is Small ribosomal subunit protein uS4 of Solidesulfovibrio magneticus (strain ATCC 700980 / DSM 13731 / RS-1) (Desulfovibrio magneticus).